Here is a 1608-residue protein sequence, read N- to C-terminus: Adenylate cyclase type 10 (1608 aa).

2 consecutive Guanylate cyclase domains span residues 42-179 (VLMF…RLAQ) and 293-418 (TIVF…ARMM). Mg(2+) contacts are provided by D47 and I48. Position 47–52 (47–52 (DISGFT)) interacts with ATP. K95 lines the hydrogencarbonate pocket. Position 99 (D99) interacts with Mg(2+). 2 residues coordinate ATP: D99 and K144. Residues V167, R176, and M337 each contribute to the hydrogencarbonate site. Residues V406 and 412 to 416 (NIAAR) contribute to the ATP site.

This sequence belongs to the adenylyl cyclase class-4/guanylyl cyclase family. Requires Mg(2+) as cofactor. It depends on Mn(2+) as a cofactor. Post-translationally, cleavage may occur to generate the active 48 kDa form. As to expression, detected in testis (at protein level). Preferentially expressed in testis.

It localises to the cell membrane. Its subcellular location is the cytoplasm. The protein localises to the cytoskeleton. It is found in the perinuclear region. The protein resides in the nucleus. It localises to the cell projection. Its subcellular location is the cilium. The protein localises to the mitochondrion. The enzyme catalyses ATP = 3',5'-cyclic AMP + diphosphate. Its activity is regulated as follows. Activated by manganese or magnesium ions. In the presence of magnesium ions, the enzyme is activated by bicarbonate. Calcium mildly increases the enzyme activity, also in the presence of magnesium ions. Its function is as follows. Catalyzes the formation of the signaling molecule cAMP. May function as sensor that mediates responses to changes in cellular bicarbonate and CO(2) levels. Has a critical role in mammalian spermatogenesis by producing the cAMP which regulates cAMP-responsive nuclear factors indispensable for sperm maturation in the epididymis. Induces capacitation, the maturational process that sperm undergo prior to fertilization. Involved in ciliary beat regulation. This chain is Adenylate cyclase type 10 (Adcy10), found in Rattus norvegicus (Rat).